A 635-amino-acid polypeptide reads, in one-letter code: 1-deoxy-D-xylulose-5-phosphate synthase (635 aa).

Thiamine diphosphate contacts are provided by residues His-73 and 114–116; that span reads SHA. Asp-146 provides a ligand contact to Mg(2+). Thiamine diphosphate contacts are provided by residues 147 to 148, Asn-176, Tyr-287, and Glu-368; that span reads GA. Asn-176 provides a ligand contact to Mg(2+).

This sequence belongs to the transketolase family. DXPS subfamily. As to quaternary structure, homodimer. Requires Mg(2+) as cofactor. Thiamine diphosphate serves as cofactor.

It catalyses the reaction D-glyceraldehyde 3-phosphate + pyruvate + H(+) = 1-deoxy-D-xylulose 5-phosphate + CO2. It functions in the pathway metabolic intermediate biosynthesis; 1-deoxy-D-xylulose 5-phosphate biosynthesis; 1-deoxy-D-xylulose 5-phosphate from D-glyceraldehyde 3-phosphate and pyruvate: step 1/1. Its function is as follows. Catalyzes the acyloin condensation reaction between C atoms 2 and 3 of pyruvate and glyceraldehyde 3-phosphate to yield 1-deoxy-D-xylulose-5-phosphate (DXP). The polypeptide is 1-deoxy-D-xylulose-5-phosphate synthase (Corynebacterium diphtheriae (strain ATCC 700971 / NCTC 13129 / Biotype gravis)).